We begin with the raw amino-acid sequence, 130 residues long: Bet1-like SNARE 1-2 (130 aa).

The Cytoplasmic segment spans residues 1–106 (MNFRRENRAS…EKKSNRKSCK (106 aa)). The t-SNARE coiled-coil homology domain maps to 33 to 95 (AHDERDNDEA…SGTINRFKLV (63 aa)). Residues 40–82 (DEALENLQDRVSFLKRVTGDIHEEVENHNRLLDKVGNKMDSAR) adopt a coiled-coil conformation. Residues 107 to 122 (LIAYFVLLFLIMYYLI) form a helical; Anchor for type IV membrane protein membrane-spanning segment. Over 123–130 (RLLNYIKG) the chain is Vesicular.

The protein belongs to the BET1 family.

Its subcellular location is the golgi apparatus membrane. The protein localises to the endoplasmic reticulum membrane. Required for vesicular transport from the ER to the Golgi complex. Functions as a SNARE associated with ER-derived vesicles. This chain is Bet1-like SNARE 1-2 (BET12), found in Arabidopsis thaliana (Mouse-ear cress).